Reading from the N-terminus, the 97-residue chain is Small ribosomal subunit protein bS20 (97 aa).

It belongs to the bacterial ribosomal protein bS20 family.

Binds directly to 16S ribosomal RNA. The chain is Small ribosomal subunit protein bS20 from Prochlorococcus marinus (strain MIT 9301).